Here is a 638-residue protein sequence, read N- to C-terminus: Threonine--tRNA ligase (638 aa).

Positions 1–61 constitute a TGS domain; sequence MPVITLPDGS…DADAQLQIIT (61 aa). Residues 243 to 534 form a catalytic region; the sequence is DHRKIGKALN…LTEEFAGFFP (292 aa). Zn(2+) is bound by residues cysteine 334, histidine 385, and histidine 511.

The protein belongs to the class-II aminoacyl-tRNA synthetase family. Homodimer. Zn(2+) is required as a cofactor.

It is found in the cytoplasm. It carries out the reaction tRNA(Thr) + L-threonine + ATP = L-threonyl-tRNA(Thr) + AMP + diphosphate + H(+). In terms of biological role, catalyzes the attachment of threonine to tRNA(Thr) in a two-step reaction: L-threonine is first activated by ATP to form Thr-AMP and then transferred to the acceptor end of tRNA(Thr). Also edits incorrectly charged L-seryl-tRNA(Thr). This chain is Threonine--tRNA ligase, found in Alteromonas mediterranea (strain DSM 17117 / CIP 110805 / LMG 28347 / Deep ecotype).